The chain runs to 176 residues: Pituitary adenylate cyclase-activating polypeptide (176 aa).

Positions 1 to 24 are cleaved as a signal peptide; it reads MTMCSGARLALLVYGILMHSSVYG. A propeptide spanning residues 25–80 is cleaved from the precursor; the sequence is SPAASGLRFPGIRPENEVYDEDGNPQQDFYDSESLGVGSPASALRDAYALYYPAEE. The segment at 98–135 is disordered; it reads QPSARRSPADAHGQGLGWDPGGSADDDSEPLSKRHSDG. An important for receptor binding region spans residues 150–158; that stretch reads VKKYLAAVL. A Leucine amide modification is found at leucine 158. Residue lysine 169 is modified to Lysine amide. A propeptide spanning residues 173 to 176 is cleaved from the precursor; the sequence is IPYL.

Belongs to the glucagon family. In terms of assembly, interacts with ADCYAP1R1 (via N-terminal extracellular domain); both PACAP27 and PACAP38 neuropeptides function as ligand for the ADCYAP1R1 receptor, which modulates the activity of downstream effectors. Interacts with VIPR1 and VIPR2; functions as ligand for VIPR1 and VIPR2 receptors, which modulate the activity of downstream effectors.

Its subcellular location is the secreted. Functionally, PACAP is a neuropeptide involved in diverse array of physiological processes through activating the PACAP subfamily of class B1 G protein-coupled receptors: VIP receptor 1 (VIPR1), VIP receptor 2 (VIPR2), and PACAP type I receptor (ADCYAP1R1). Exerts neuroprotective and general cytoprotective effects due to anti-apoptotic, anti-inflammatory, and antioxidant actions. Promotes neuron projection development through the RAPGEF2/Rap1/B-Raf/ERK pathway. In chromaffin cells, induces long-lasting increase of intracellular calcium concentrations and neuroendocrine secretion. Involved in the control of glucose homeostasis, induces insulin secretion by pancreatic beta cells. PACAP exists in two bioactive forms from proteolysis of the same precursor protein, PACAP27 and PACAP38, which differ by eleven amino acid residues in the C-terminus. This is Pituitary adenylate cyclase-activating polypeptide (ADCYAP1) from Bos taurus (Bovine).